A 189-amino-acid polypeptide reads, in one-letter code: Peptidyl-tRNA hydrolase (189 aa).

Residue Tyr14 participates in tRNA binding. The active-site Proton acceptor is the His19. TRNA-binding residues include Tyr64, Asn66, and Asn112.

It belongs to the PTH family. As to quaternary structure, monomer.

The protein resides in the cytoplasm. It catalyses the reaction an N-acyl-L-alpha-aminoacyl-tRNA + H2O = an N-acyl-L-amino acid + a tRNA + H(+). Hydrolyzes ribosome-free peptidyl-tRNAs (with 1 or more amino acids incorporated), which drop off the ribosome during protein synthesis, or as a result of ribosome stalling. Its function is as follows. Catalyzes the release of premature peptidyl moieties from peptidyl-tRNA molecules trapped in stalled 50S ribosomal subunits, and thus maintains levels of free tRNAs and 50S ribosomes. This is Peptidyl-tRNA hydrolase from Clostridium botulinum (strain ATCC 19397 / Type A).